The sequence spans 285 residues: Complement C1q tumor necrosis factor-related protein 2 (285 aa).

An N-terminal signal peptide occupies residues 1 to 15; the sequence is MIPWVLLACALPCAA. The tract at residues 33–144 is disordered; that stretch reads QLVCSLPGPQ…PGLPGPCSCG (112 aa). The 102-residue stretch at 40–141 folds into the Collagen-like domain; that stretch reads GPQGPPGPPG…KGEPGLPGPC (102 aa). A compositionally biased stretch (pro residues) spans 41–51; it reads PQGPPGPPGAP. Over residues 53 to 65 the composition is skewed to low complexity; it reads PSGMMGRMGFPGK. Residues 66–78 show a composition bias toward basic and acidic residues; it reads DGQDGHDGDRGDS. Positions 84-120 are enriched in low complexity; sequence PGRTGNRGKPGPKGKAGAIGRAGPRGPKGVNGTPGKH. The region spanning 145–281 is the C1q domain; the sequence is SGHTKSAFSV…GFLIYADQDD (137 aa).

May interact with ERFE. In terms of tissue distribution, expressed in adipose tissue.

The protein localises to the secreted. Functionally, involved in the regulation of lipid metabolism in adipose tissue and liver. The chain is Complement C1q tumor necrosis factor-related protein 2 (C1QTNF2) from Homo sapiens (Human).